A 126-amino-acid chain; its full sequence is Aspartate 1-decarboxylase (126 aa).

The Schiff-base intermediate with substrate; via pyruvic acid role is filled by S25. A Pyruvic acid (Ser) modification is found at S25. Substrate is bound at residue T57. Y58 acts as the Proton donor in catalysis. 73–75 provides a ligand contact to substrate; the sequence is GGA.

The protein belongs to the PanD family. As to quaternary structure, heterooctamer of four alpha and four beta subunits. The cofactor is pyruvate. In terms of processing, is synthesized initially as an inactive proenzyme, which is activated by self-cleavage at a specific serine bond to produce a beta-subunit with a hydroxyl group at its C-terminus and an alpha-subunit with a pyruvoyl group at its N-terminus.

Its subcellular location is the cytoplasm. It catalyses the reaction L-aspartate + H(+) = beta-alanine + CO2. The protein operates within cofactor biosynthesis; (R)-pantothenate biosynthesis; beta-alanine from L-aspartate: step 1/1. Catalyzes the pyruvoyl-dependent decarboxylation of aspartate to produce beta-alanine. This is Aspartate 1-decarboxylase from Xanthomonas campestris pv. campestris (strain B100).